Reading from the N-terminus, the 161-residue chain is Nucleotide-binding protein swp_1151 (161 aa).

The protein belongs to the YajQ family.

In terms of biological role, nucleotide-binding protein. The sequence is that of Nucleotide-binding protein swp_1151 from Shewanella piezotolerans (strain WP3 / JCM 13877).